The primary structure comprises 459 residues: ATP-dependent protease ATPase subunit HslU (459 aa).

ATP contacts are provided by residues valine 26, 68 to 73 (GVGKTE), aspartate 271, glutamate 337, and arginine 409.

The protein belongs to the ClpX chaperone family. HslU subfamily. In terms of assembly, a double ring-shaped homohexamer of HslV is capped on each side by a ring-shaped HslU homohexamer. The assembly of the HslU/HslV complex is dependent on binding of ATP.

Its subcellular location is the cytoplasm. In terms of biological role, ATPase subunit of a proteasome-like degradation complex; this subunit has chaperone activity. The binding of ATP and its subsequent hydrolysis by HslU are essential for unfolding of protein substrates subsequently hydrolyzed by HslV. HslU recognizes the N-terminal part of its protein substrates and unfolds these before they are guided to HslV for hydrolysis. In Xylella fastidiosa (strain 9a5c), this protein is ATP-dependent protease ATPase subunit HslU.